Consider the following 332-residue polypeptide: 6-phosphogluconolactonase (332 aa).

Belongs to the cycloisomerase 2 family.

It catalyses the reaction 6-phospho-D-glucono-1,5-lactone + H2O = 6-phospho-D-gluconate + H(+). It participates in carbohydrate degradation; pentose phosphate pathway; D-ribulose 5-phosphate from D-glucose 6-phosphate (oxidative stage): step 2/3. Catalyzes the hydrolysis of 6-phosphogluconolactone to 6-phosphogluconate. The protein is 6-phosphogluconolactonase of Pectobacterium carotovorum subsp. carotovorum (strain PC1).